The primary structure comprises 143 residues: Small ribosomal subunit protein bS6 (143 aa).

The segment at 96–143 (VTEASPMAAAKEERRDDRREVKKDVAAAPVEAKEDSVEEKSEEAASEE) is disordered. Residues 105-143 (AKEERRDDRREVKKDVAAAPVEAKEDSVEEKSEEAASEE) are compositionally biased toward basic and acidic residues.

The protein belongs to the bacterial ribosomal protein bS6 family.

Its function is as follows. Binds together with bS18 to 16S ribosomal RNA. The chain is Small ribosomal subunit protein bS6 from Colwellia psychrerythraea (strain 34H / ATCC BAA-681) (Vibrio psychroerythus).